Reading from the N-terminus, the 922-residue chain is Protein translocase subunit SecA (922 aa).

ATP-binding positions include Gln87, 105–109 (GEGKT), and Asp519. Positions 850 to 891 (HASRQMRSIQGNAQHNSMGSFSGSGHGMGPTALSARSRPENA) are disordered. Over residues 854 to 865 (QMRSIQGNAQHN) the composition is skewed to polar residues. Residues Cys906, Cys908, Cys917, and Cys918 each contribute to the Zn(2+) site.

This sequence belongs to the SecA family. As to quaternary structure, monomer and homodimer. Part of the essential Sec protein translocation apparatus which comprises SecA, SecYEG and auxiliary proteins SecDF. Other proteins may also be involved. Requires Zn(2+) as cofactor.

It localises to the cell inner membrane. Its subcellular location is the cytoplasm. The enzyme catalyses ATP + H2O + cellular proteinSide 1 = ADP + phosphate + cellular proteinSide 2.. Functionally, part of the Sec protein translocase complex. Interacts with the SecYEG preprotein conducting channel. Has a central role in coupling the hydrolysis of ATP to the transfer of proteins into and across the cell membrane, serving as an ATP-driven molecular motor driving the stepwise translocation of polypeptide chains across the membrane. This is Protein translocase subunit SecA from Treponema denticola (strain ATCC 35405 / DSM 14222 / CIP 103919 / JCM 8153 / KCTC 15104).